A 44-amino-acid polypeptide reads, in one-letter code: Photosystem I reaction center subunit IX (44 aa).

The helical transmembrane segment at 9–29 (WFRSAPVVATIWIVLTAGILV) threads the bilayer.

The protein belongs to the PsaJ family.

The protein resides in the cellular thylakoid membrane. In terms of biological role, may help in the organization of the PsaE and PsaF subunits. This chain is Photosystem I reaction center subunit IX, found in Prochlorococcus marinus (strain MIT 9211).